We begin with the raw amino-acid sequence, 344 residues long: Anthranilate phosphoribosyltransferase (344 aa).

5-phospho-alpha-D-ribose 1-diphosphate contacts are provided by residues Gly84, 87–88, Thr92, 94–97, 112–120, and Ser124; these read GD, NIST, and KHGNRSVSS. Gly84 provides a ligand contact to anthranilate. Mg(2+) is bound at residue Ser96. Asn115 is a binding site for anthranilate. Arg170 is a binding site for anthranilate. Mg(2+)-binding residues include Asp229 and Glu230.

It belongs to the anthranilate phosphoribosyltransferase family. Homodimer. Mg(2+) is required as a cofactor.

The catalysed reaction is N-(5-phospho-beta-D-ribosyl)anthranilate + diphosphate = 5-phospho-alpha-D-ribose 1-diphosphate + anthranilate. The protein operates within amino-acid biosynthesis; L-tryptophan biosynthesis; L-tryptophan from chorismate: step 2/5. Its function is as follows. Catalyzes the transfer of the phosphoribosyl group of 5-phosphorylribose-1-pyrophosphate (PRPP) to anthranilate to yield N-(5'-phosphoribosyl)-anthranilate (PRA). This is Anthranilate phosphoribosyltransferase from Xylella fastidiosa (strain M23).